Consider the following 399-residue polypeptide: L-2-hydroxyglutarate dehydrogenase (399 aa).

This sequence belongs to the L2HGDH family. It depends on FAD as a cofactor.

The catalysed reaction is (S)-2-hydroxyglutarate + A = 2-oxoglutarate + AH2. Functionally, catalyzes the dehydrogenation of L-2-hydroxyglutarate (L2HG or(S)-2-hydroxyglutarate) to 2-oxoglutarate (alpha-ketoglutarate). Active in vitro with the artificial electron acceptor 2,6-dichlorophenolindophenol (DCPIP). Also displays a very low oxidase activity in vitro on L-2-hydroxyglutarate with O2 as the electron acceptor, but this activity is most likely not physiological. This Indibacter alkaliphilus (strain CCUG 57479 / KCTC 22604 / LW1) protein is L-2-hydroxyglutarate dehydrogenase.